We begin with the raw amino-acid sequence, 1522 residues long: Histone-lysine N-methyltransferase EZH2 (1522 aa).

A disordered region spans residues 1–196 (MSPARGDANA…PKTPTPKNTE (196 aa)). A compositionally biased stretch (basic and acidic residues) spans 39–61 (NRENLRDRDRADKLEKLEKDAHA). Composition is skewed to low complexity over residues 64–76 (QTQT…PVTV) and 103–130 (RGST…SPSL). Positions 141–162 (ILASRTSRFSNRTGIRDSQSPS) are enriched in polar residues. Over residues 180-195 (ATSNTPAPKTPTPKNT) the composition is skewed to low complexity. Residues 190–220 (PTPKNTEWTVDKIASALSVLAEEVPQNHSRL) are SBD domain. Residues 221-250 (VNFLLEETEKRAPQPRHLSKTDPFAHMKSK) are EBD domain. The segment at 251-300 (AIDANRPRPEGVPTMDVKFKQHSGEYGKSRNSGRRFQYPVVCIKPDREPV) is BAM domain. The tract at residues 301 to 320 (PPYRFHHAEIRKNILALNSQ) is SAL domain. Residues 321-360 (LNFVPHLRDVDPNSAEEQKYSAWLMDLENLDSKSGFKIQP) form an SRM domain region. The SANT1L domain stretch occupies residues 361 to 480 (RSQKIAKRAQ…PIFDNKRAKD (120 aa)). The disordered stretch occupies residues 406-426 (PESDDSMTPQQKSNLLDTYSD). Polar residues predominate over residues 411–422 (SMTPQQKSNLLD). Positions 481–560 (APGSQKPPDE…EQRQKTEGGS (80 aa)) are MCSS domain. Positions 508, 511, 516, 518, 570, 574, 615, 625, 685, 687, 691, 697, 699, 709, 713, 715, 720, 727, 729, 736, 746, 748, 755, 760, 763, and 784 each coordinate Zn(2+). An SANT2L domain region spans residues 561–650 (ANAPPAHPPC…PVEPRTIPKQ (90 aa)). Residues 658-780 (RRKKQLMSDW…PENAYDEVLH (123 aa)) form the CXC domain. The SET domain occupies 795 to 919 (KAVVLGKSQL…AGEELFFNYG (125 aa)). S-adenosyl-L-homocysteine is bound by residues tyrosine 809, lysine 852, serine 854, and tyrosine 855. The S-adenosyl-L-methionine site is built by tyrosine 809, lysine 852, serine 854, tyrosine 855, asparagine 880, histidine 881, and threonine 926. Histidine 881 serves as a coordination point for S-adenosyl-L-homocysteine. Lysine 927 is a binding site for S-adenosyl-L-homocysteine. A disordered region spans residues 933-1522 (NEQSGAETTP…KPARYRDEGE (590 aa)). Positions 935–946 (QSGAETTPQQPK) are enriched in polar residues. The span at 971–988 (GFDDDDRDGNDSDPDDLW) shows a compositional bias: acidic residues. The span at 992–1024 (QQQQQQQQQQQQQQQQQQQQQQQQQQQQQQQQQ) shows a compositional bias: low complexity. Positions 1025–1038 (AQKPQPSTSHQPQS) are enriched in polar residues. Over residues 1053-1066 (SPDKQLRRENHDAQ) the composition is skewed to basic and acidic residues. A compositionally biased stretch (low complexity) spans 1072–1091 (QFQQQEQQQQQQQQQQQQQQ). The segment covering 1127 to 1136 (DSSSGGSANE) has biased composition (polar residues). Positions 1142–1162 (KPSRRGGARPGAGRKPKHRPP) are enriched in basic residues. 2 stretches are compositionally biased toward basic and acidic residues: residues 1207–1221 (SDSK…TDKE) and 1228–1238 (VNEKDREKGRD). The segment covering 1255–1299 (KSAPSPAKKQASSPTKISDSNRTTSKNTSSNNNNNTNNNNNNNNN) has biased composition (low complexity). Residues 1316–1330 (HLTNSQPAALSPSAT) show a composition bias toward polar residues. 2 stretches are compositionally biased toward low complexity: residues 1355-1385 (STMT…SSSS) and 1415-1428 (SSSL…SVFS). The segment covering 1455–1464 (SGLNSTSLSQ) has biased composition (polar residues). Residues 1465–1494 (ERGEKHEKHEKEKPKEKKGEKERERERDRS) show a composition bias toward basic and acidic residues.

Belongs to the class V-like SAM-binding methyltransferase superfamily. Histone-lysine methyltransferase family. EZ subfamily. Component of the polycomb repressive complex 2 (PRC2) that consists of four core subunits icluding EZH2, EED, SUZ12, and RBBP4, among which EZH2 is the catalytic subunit and which minimally requires EED and SUZ12 for catalysis.

The protein localises to the nucleus. The catalysed reaction is L-lysyl(27)-[histone H3] + 3 S-adenosyl-L-methionine = N(6),N(6),N(6)-trimethyl-L-lysyl(27)-[histone H3] + 3 S-adenosyl-L-homocysteine + 3 H(+). Its activity is regulated as follows. The end product of PRC2 catalysis, H3K27me3, interacts with EED to stimulate the enzymatic activity of PRC2 allosterically. The enzymatic activity of PRC2 is regulated in a very complex manner and PCR2 can adopt different stages including the autoinhibited (A); SAM-bound autoinhibited (A'), basal (B), and H3K27me3-stimulated (S) stages. Actictivity is inhibited by pyridone inhibitors such as GSK126. In terms of biological role, catalytic subunit of the of the Polycomb Repressive Complex 2 (PRC2), a histone H3 lysine methyltransferase responsible for generating mono-, di-, and tri-methylation on Lys27 (H3K27me1, H3K27me2 and H3K27me3). The tri-methylated form is known to be critical in gene repression, and its proper placement is essential in defining repression patterns during development. The PRC2 complex interacts with thousands of RNA species in vivo, but the physiological function of RNA binding has still to be determined. This is Histone-lysine N-methyltransferase EZH2 from Chaetomium thermophilum (strain DSM 1495 / CBS 144.50 / IMI 039719) (Thermochaetoides thermophila).